A 154-amino-acid polypeptide reads, in one-letter code: Ribosome maturation factor RimP (154 aa).

The protein belongs to the RimP family.

It is found in the cytoplasm. Its function is as follows. Required for maturation of 30S ribosomal subunits. The protein is Ribosome maturation factor RimP of Flavobacterium psychrophilum (strain ATCC 49511 / DSM 21280 / CIP 103535 / JIP02/86).